The following is a 995-amino-acid chain: Endosome/lysosome-associated apoptosis and autophagy regulator family member 2 (995 aa).

Residues 1-21 form the signal peptide; the sequence is MGVFCWSGCLVISLQLLLGAA. Over 22–895 the chain is Extracellular; sequence LDNLSTCKEE…ACESIDFWLK (874 aa). Residues asparagine 24, asparagine 136, asparagine 245, asparagine 372, asparagine 527, asparagine 649, asparagine 683, asparagine 700, and asparagine 758 are each glycosylated (N-linked (GlcNAc...) asparagine). Positions 639–843 constitute an MRH domain; it reads SECLVTYTNE…LWETAEACPL (205 aa). 2 disulfides stabilise this stretch: cysteine 641/cysteine 687 and cysteine 697/cysteine 725. Cystine bridges form between cysteine 793-cysteine 829 and cysteine 805-cysteine 841. An N-linked (GlcNAc...) asparagine glycan is attached at asparagine 883. Residues 896 to 916 traverse the membrane as a helical segment; it reads VGAGVGAFTAVLLIALTCYFW. The Cytoplasmic portion of the chain corresponds to 917-995; the sequence is KKNQKLEYKY…QLKSSRAQNI (79 aa).

Belongs to the ELAPOR family. As to expression, expressed in the animal half of the embryo during gastrulation, becoming restricted to the ventral ectoderm at stage 12.5. At the neurula stage, expressed in the anterior ectoderm surrounding the neural plate, and weakly in the epidermis. Expression is especially high in the presumptive hatching gland and cement gland regions. Surprisingly, by the tailbud stage (stage 22), expression is limited to the hatching gland and is not seen in the cement gland. Conversely, in tadpoles expressed broadly in the head, heart and fin. Expression in the head is seen in the primary mouth and in the brain, eyes, otic vesicles and olfactory pits.

It is found in the cell membrane. In terms of biological role, functions as a regulator of the BMP signaling pathway and is involved in epidermal differentiation. The protein is Endosome/lysosome-associated apoptosis and autophagy regulator family member 2 (elapor2) of Xenopus laevis (African clawed frog).